Reading from the N-terminus, the 67-residue chain is Large ribosomal subunit protein bL31 (67 aa).

4 residues coordinate Zn(2+): Cys16, Cys18, Cys38, and Cys41.

The protein belongs to the bacterial ribosomal protein bL31 family. Type A subfamily. As to quaternary structure, part of the 50S ribosomal subunit. Zn(2+) serves as cofactor.

Binds the 23S rRNA. The sequence is that of Large ribosomal subunit protein bL31 from Thioalkalivibrio sulfidiphilus (strain HL-EbGR7).